The chain runs to 257 residues: UPF0246 protein Sbal195_1149 (257 aa).

The protein belongs to the UPF0246 family.

This is UPF0246 protein Sbal195_1149 from Shewanella baltica (strain OS195).